The primary structure comprises 473 residues: Serine/threonine-protein phosphatase 2A activator 1 (473 aa).

The interval 360 to 473 is disordered; the sequence is NAVPPPTSAH…HVPTKAPWAK (114 aa). Polar residues predominate over residues 368–378; sequence AHMSTTQSQSR. Low complexity predominate over residues 395 to 416; that stretch reads APWATATQAAPPAGAGTAAPWA.

This sequence belongs to the PTPA-type PPIase family.

The protein localises to the cytoplasm. It localises to the nucleus. It carries out the reaction [protein]-peptidylproline (omega=180) = [protein]-peptidylproline (omega=0). Functionally, PPIases accelerate the folding of proteins. It catalyzes the cis-trans isomerization of proline imidic peptide bonds in oligopeptides. Acts as a regulatory subunit for PP2A-like phosphatases modulating their activity or substrate specificity, probably by inducing a conformational change in the catalytic subunit, a direct target of the PPIase. Can reactivate inactive phosphatase PP2A-phosphatase methylesterase complexes (PP2Ai) in presence of ATP and Mg(2+) by dissociating the inactive form from the complex. In Aspergillus fumigatus (strain ATCC MYA-4609 / CBS 101355 / FGSC A1100 / Af293) (Neosartorya fumigata), this protein is Serine/threonine-protein phosphatase 2A activator 1 (rrd1).